Consider the following 552-residue polypeptide: Glutamyl-tRNA reductase 1, chloroplastic (552 aa).

Substrate contacts are provided by residues 150-153, Ser-210, 215-217, and Gln-221; these read TCNR and EGQ. The active-site Nucleophile is the Cys-151. NADP(+) is bound at residue 292-297; that stretch reads GAGKMG.

The protein belongs to the glutamyl-tRNA reductase family. In terms of tissue distribution, primarily in cotyledons and hypocotyls of greening cucumber seedlings.

It is found in the plastid. Its subcellular location is the chloroplast. The enzyme catalyses (S)-4-amino-5-oxopentanoate + tRNA(Glu) + NADP(+) = L-glutamyl-tRNA(Glu) + NADPH + H(+). It functions in the pathway porphyrin-containing compound metabolism; protoporphyrin-IX biosynthesis; 5-aminolevulinate from L-glutamyl-tRNA(Glu): step 1/2. In terms of biological role, catalyzes the NADPH-dependent reduction of glutamyl-tRNA(Glu) to glutamate 1-semialdehyde (GSA). The protein is Glutamyl-tRNA reductase 1, chloroplastic (HEMA1) of Cucumis sativus (Cucumber).